We begin with the raw amino-acid sequence, 165 residues long: Putative tyrosine-protein phosphatase AMV078 (165 aa).

Residues 2–149 (NISNINNDIY…LKFYNSYKNI (148 aa)) enclose the Tyrosine-protein phosphatase domain. The Phosphocysteine intermediate role is filled by C94.

This sequence belongs to the protein-tyrosine phosphatase family. Non-receptor class dual specificity subfamily.

It catalyses the reaction O-phospho-L-tyrosyl-[protein] + H2O = L-tyrosyl-[protein] + phosphate. The chain is Putative tyrosine-protein phosphatase AMV078 from Amsacta moorei entomopoxvirus (AmEPV).